Here is a 353-residue protein sequence, read N- to C-terminus: E3 ubiquitin-protein ligase Os03g0188200 (353 aa).

A helical transmembrane segment spans residues 48-68; the sequence is VVVLVALITAFVLLTVFSVLI. An RING-type; atypical zinc finger spans residues 133 to 175; that stretch reads CAVCLAEFADSDELRVLPACCHVFHPDCIDPWLAAAVTCPLCR. 2 stretches are compositionally biased toward basic and acidic residues: residues 308-318 and 340-353; these read ADWDAGEEHGG and GSKE…LNRV. The tract at residues 308–353 is disordered; it reads ADWDAGEEHGGSKRVHPVAGAQDETPSGSGSDGSKENSDSDALNRV.

Its subcellular location is the membrane. It carries out the reaction S-ubiquitinyl-[E2 ubiquitin-conjugating enzyme]-L-cysteine + [acceptor protein]-L-lysine = [E2 ubiquitin-conjugating enzyme]-L-cysteine + N(6)-ubiquitinyl-[acceptor protein]-L-lysine.. It functions in the pathway protein modification; protein ubiquitination. Functionally, possesses E3 ubiquitin-protein ligase in vitro. This Oryza sativa subsp. japonica (Rice) protein is E3 ubiquitin-protein ligase Os03g0188200.